A 307-amino-acid polypeptide reads, in one-letter code: Membrane protein insertase YidC 1 (307 aa).

Positions 1–22 (MKSKKGLTLTITLGTLALFLSG) are cleaved as a signal peptide. C23 is lipidated: N-palmitoyl cysteine. A lipid anchor (S-diacylglycerol cysteine) is attached at C23. The next 5 membrane-spanning stretches (helical) occupy residues 59–79 (YGWAIIGLTVIVRLVLLPMMI), 136–156 (GIGCLPLLIQLPIFSALYYAI), 177–197 (LILAILAFLSYLAQGYLSMIG), 205–225 (TMRLMLIMSPVMILFVSMSAP), and 226–246 (AGLGLYFFVGGLFACLQTLII). Residues 260–307 (ELKKHPIKTPTPTQPKPINATESKPSHPRPQNNAGRGRNAGKQQRHHK) form a disordered region.

This sequence belongs to the OXA1/ALB3/YidC family. Type 2 subfamily.

Its subcellular location is the cell membrane. Functionally, required for the insertion and/or proper folding and/or complex formation of integral membrane proteins into the membrane. Involved in integration of membrane proteins that insert both dependently and independently of the Sec translocase complex, as well as at least some lipoproteins. This is Membrane protein insertase YidC 1 from Lactiplantibacillus plantarum (strain ATCC BAA-793 / NCIMB 8826 / WCFS1) (Lactobacillus plantarum).